The following is a 764-amino-acid chain: Protein Lines homolog 1 (764 aa).

Disordered regions lie at residues 615 to 668 (SQSQ…TSLC) and 682 to 702 (WEEQ…SSPF). The span at 645 to 654 (DSSEASEEET) shows a compositional bias: acidic residues. Ser650 is subject to Phosphoserine. Residues 658–668 (HLANSKQTSLC) show a composition bias toward polar residues. Over residues 691-702 (EPLLSAESSSPF) the composition is skewed to low complexity.

This sequence belongs to the protein lines family.

This Mus musculus (Mouse) protein is Protein Lines homolog 1.